Here is a 369-residue protein sequence, read N- to C-terminus: Anhydro-N-acetylmuramic acid kinase (369 aa).

ATP is bound at residue 12–19; sequence GTSLDGVD.

This sequence belongs to the anhydro-N-acetylmuramic acid kinase family.

It catalyses the reaction 1,6-anhydro-N-acetyl-beta-muramate + ATP + H2O = N-acetyl-D-muramate 6-phosphate + ADP + H(+). Its pathway is amino-sugar metabolism; 1,6-anhydro-N-acetylmuramate degradation. The protein operates within cell wall biogenesis; peptidoglycan recycling. Its function is as follows. Catalyzes the specific phosphorylation of 1,6-anhydro-N-acetylmuramic acid (anhMurNAc) with the simultaneous cleavage of the 1,6-anhydro ring, generating MurNAc-6-P. Is required for the utilization of anhMurNAc either imported from the medium or derived from its own cell wall murein, and thus plays a role in cell wall recycling. The polypeptide is Anhydro-N-acetylmuramic acid kinase (Escherichia coli O8 (strain IAI1)).